The primary structure comprises 416 residues: Imidazolonepropionase (416 aa).

Fe(3+)-binding residues include H78 and H80. Zn(2+)-binding residues include H78 and H80. Positions 87, 150, and 183 each coordinate 4-imidazolone-5-propanoate. Y150 contacts N-formimidoyl-L-glutamate. Residue H248 participates in Fe(3+) binding. A Zn(2+)-binding site is contributed by H248. Q251 contributes to the 4-imidazolone-5-propanoate binding site. Position 323 (D323) interacts with Fe(3+). D323 serves as a coordination point for Zn(2+). N-formimidoyl-L-glutamate-binding residues include N325 and G327. T328 is a 4-imidazolone-5-propanoate binding site.

Belongs to the metallo-dependent hydrolases superfamily. HutI family. The cofactor is Zn(2+). It depends on Fe(3+) as a cofactor.

The protein localises to the cytoplasm. It catalyses the reaction 4-imidazolone-5-propanoate + H2O = N-formimidoyl-L-glutamate. Its pathway is amino-acid degradation; L-histidine degradation into L-glutamate; N-formimidoyl-L-glutamate from L-histidine: step 3/3. Functionally, catalyzes the hydrolytic cleavage of the carbon-nitrogen bond in imidazolone-5-propanoate to yield N-formimidoyl-L-glutamate. It is the third step in the universal histidine degradation pathway. In Vibrio parahaemolyticus serotype O3:K6 (strain RIMD 2210633), this protein is Imidazolonepropionase.